The sequence spans 83 residues: Small ribosomal subunit protein bS16 (83 aa).

It belongs to the bacterial ribosomal protein bS16 family.

The chain is Small ribosomal subunit protein bS16 from Pseudomonas putida (strain ATCC 700007 / DSM 6899 / JCM 31910 / BCRC 17059 / LMG 24140 / F1).